We begin with the raw amino-acid sequence, 340 residues long: DNA-directed RNA polymerase subunit alpha (340 aa).

An alpha N-terminal domain (alpha-NTD) region spans residues 1-236 (MLSLSKNWNT…EQLQLFIAFE (236 aa)). The segment at 251 to 340 (FSPYLLKRVD…LSKRYEDSYN (90 aa)) is alpha C-terminal domain (alpha-CTD).

The protein belongs to the RNA polymerase alpha chain family. Homodimer. The RNAP catalytic core consists of 2 alpha, 1 beta, 1 beta' and 1 omega subunit. When a sigma factor is associated with the core the holoenzyme is formed, which can initiate transcription.

It catalyses the reaction RNA(n) + a ribonucleoside 5'-triphosphate = RNA(n+1) + diphosphate. Its function is as follows. DNA-dependent RNA polymerase catalyzes the transcription of DNA into RNA using the four ribonucleoside triphosphates as substrates. This is DNA-directed RNA polymerase subunit alpha from Rickettsia prowazekii (strain Madrid E).